Here is a 736-residue protein sequence, read N- to C-terminus: Copper-exporting P-type ATPase (736 aa).

The segment covering Met-1–Ala-17 has biased composition (basic residues). The tract at residues Met-1–Ser-32 is disordered. 6 helical membrane-spanning segments follow: residues Phe-85–Leu-105, Ser-114–Phe-134, Phe-149–Trp-169, Val-183–Val-203, Gly-341–Leu-361, and Tyr-369–Ala-389. The active-site 4-aspartylphosphate intermediate is Asp-426. 3 residues coordinate Mg(2+): Asp-426, Thr-428, and Asp-624. Helical transmembrane passes span Leu-682 to Pro-702 and Leu-706 to Ile-726.

Belongs to the cation transport ATPase (P-type) (TC 3.A.3) family. Type IB subfamily. It depends on Mg(2+) as a cofactor.

It localises to the cell inner membrane. The enzyme catalyses Cu(+)(in) + ATP + H2O = Cu(+)(out) + ADP + phosphate + H(+). Activated by phospholipids, Mg(2+) and Cu(+). In terms of biological role, couples the hydrolysis of ATP with the export of copper. This chain is Copper-exporting P-type ATPase, found in Legionella pneumophila subsp. pneumophila (strain Philadelphia 1 / ATCC 33152 / DSM 7513).